Reading from the N-terminus, the 284-residue chain is Homeobox protein SMOX-5 (284 aa).

A DNA-binding region (homeobox) is located at residues 37-96 (RRKTRTTFSNCQLNELENNFNRQRYLTPTDRDRIAKHLGLTNTQVITWFQNRRAKLKREA). The interval 117-172 (LSLSDHDHEETQIDDENEQGDNNNDDDGDDNDVEEDDGEEQEKNHTKYLTQPPSIS) is disordered. Positions 128-156 (QIDDENEQGDNNNDDDGDDNDVEEDDGEE) are enriched in acidic residues.

The protein localises to the nucleus. The sequence is that of Homeobox protein SMOX-5 (SMOX-5) from Schistosoma mansoni (Blood fluke).